Consider the following 501-residue polypeptide: MTSYFPWLTIIVVLPIFAASSIFFLPHKGNKVFRWYTTCICLTELLLTTYVFCYHFQLDDQLIQLEEDLKCINIFDFHWRLGIDGLSIGPILLTGFITTLATLAAWPVTRNSRLFYLLMLVMYSGQIGLFSSRDLLLFFIMWELELIPVYLLLSMWGGKKRLYSATKFILYTAGGSVFLLIGVLGMGLYGSNEPTLDFERLANQSYPVALEIIFYFGFLIAYAVKSPIIPLHTWLPDTHGEAHYSTCMLLAGILLKMGAYGLIRINMELLPHAHSLFSPWLVIVGTIQIIYAASTSFGQRNLKKRIACSSVSHMGFIIIGIGSITDTGLNGAILQILSHGFIGAALFFLSGTSCDRIRFVYLDEMGGISLPMPKIFTMFSSFSMASLALPGMSGFVAELVVFLGIITSPKYLLMPKILITFVMAIGMILTPIYLLSMSRQMFYGYKLFNVPNSFFVDSGPRELFVSICIFLPVIGIGIYPDCVFSLSVDKIEGILSNYFHR.

14 consecutive transmembrane segments (helical) span residues 5 to 25 (FPWL…IFFL), 38 to 58 (TCIC…HFQL), 88 to 108 (IGPI…AWPV), 114 to 131 (LFYL…GLFS), 135 to 155 (LLLF…LLSM), 168 to 188 (FILY…GMGL), 209 to 229 (ALEI…SPII), 243 to 263 (HYST…YGLI), 273 to 293 (AHSL…IYAA), 306 to 326 (IACS…SITD), 331 to 351 (GAIL…FLSG), 387 to 407 (LALP…GIIT), 417 to 437 (ILIT…LLSM), and 464 to 484 (FVSI…DCVF).

This sequence belongs to the complex I subunit 4 family.

Its subcellular location is the plastid. The protein resides in the chloroplast thylakoid membrane. The enzyme catalyses a plastoquinone + NADH + (n+1) H(+)(in) = a plastoquinol + NAD(+) + n H(+)(out). The catalysed reaction is a plastoquinone + NADPH + (n+1) H(+)(in) = a plastoquinol + NADP(+) + n H(+)(out). The sequence is that of NAD(P)H-quinone oxidoreductase chain 4, chloroplastic from Dioscorea elephantipes (Elephant's foot yam).